We begin with the raw amino-acid sequence, 337 residues long: Ornithine carbamoyltransferase, catabolic (337 aa).

Carbamoyl phosphate is bound by residues 57-60 (STRT), Gln84, Arg108, and 135-138 (HPTQ). L-ornithine contacts are provided by residues Asn167, Asp231, and 235–236 (SM). Carbamoyl phosphate is bound by residues 272-273 (CL) and Arg317.

Belongs to the aspartate/ornithine carbamoyltransferase superfamily. OTCase family.

It localises to the cytoplasm. It carries out the reaction carbamoyl phosphate + L-ornithine = L-citrulline + phosphate + H(+). It participates in amino-acid degradation; L-arginine degradation via ADI pathway; carbamoyl phosphate from L-arginine: step 2/2. Functionally, reversibly catalyzes the transfer of the carbamoyl group from carbamoyl phosphate (CP) to the N(epsilon) atom of ornithine (ORN) to produce L-citrulline. This Streptococcus agalactiae protein is Ornithine carbamoyltransferase, catabolic (arcB).